The following is a 700-amino-acid chain: Probable transcription factor FUP6 (700 aa).

Disordered stretches follow at residues 343 to 364 (SEAGLGRATSEDESSQKHNRHS) and 577 to 624 (FDSV…PLNQ). Polar residues predominate over residues 577 to 595 (FDSVHSGRDSVSSAMNYQS). Residues 596-607 (DSRKRARLDTES) show a composition bias toward basic and acidic residues. The span at 608–623 (NPRSSQRNDGSGQPLN) shows a compositional bias: polar residues.

It is found in the nucleus. Its function is as follows. Probable transcrition factor; part of the gene cluster that mediates the biosynthesis of the mycotoxin fusaproliferin (FUP) that belongs to the class of bicyclic sesterterpenoids. The polypeptide is Probable transcription factor FUP6 (Fusarium proliferatum (strain ET1) (Orchid endophyte fungus)).